Consider the following 337-residue polypeptide: Anthranilate phosphoribosyltransferase (337 aa).

5-phospho-alpha-D-ribose 1-diphosphate contacts are provided by residues Gly-81, 84–85 (GD), Thr-89, 91–94 (NIST), 109–117 (KHGNRALSS), and Thr-121. Gly-81 provides a ligand contact to anthranilate. Residue Ser-93 coordinates Mg(2+). Asn-112 lines the anthranilate pocket. Arg-167 is a binding site for anthranilate. Mg(2+)-binding residues include Asp-225 and Glu-226.

The protein belongs to the anthranilate phosphoribosyltransferase family. Homodimer. The cofactor is Mg(2+).

The catalysed reaction is N-(5-phospho-beta-D-ribosyl)anthranilate + diphosphate = 5-phospho-alpha-D-ribose 1-diphosphate + anthranilate. It functions in the pathway amino-acid biosynthesis; L-tryptophan biosynthesis; L-tryptophan from chorismate: step 2/5. Its function is as follows. Catalyzes the transfer of the phosphoribosyl group of 5-phosphorylribose-1-pyrophosphate (PRPP) to anthranilate to yield N-(5'-phosphoribosyl)-anthranilate (PRA). This chain is Anthranilate phosphoribosyltransferase, found in Sinorhizobium medicae (strain WSM419) (Ensifer medicae).